The sequence spans 231 residues: Ion-translocating oxidoreductase complex subunit E (231 aa).

6 helical membrane-spanning segments follow: residues 18 to 38 (ALVQLLGLCPLLAVTSTATNA), 39 to 59 (LGLGLATTLVLTLTNLTISTL), 63 to 83 (TPAEIRIPIYVMIIASVVSAV), 86 to 106 (LINAYAFGLYQSLGIFIPLIV), 125 to 145 (ALSALDGFSIGMGATCAMFVL), and 182 to 202 (PFLLAMLPPGAFIGLGLMLAG).

It belongs to the NqrDE/RnfAE family. In terms of assembly, the complex is composed of six subunits: RsxA, RsxB, RsxC, RsxD, RsxE and RsxG.

The protein localises to the cell inner membrane. Functionally, part of a membrane-bound complex that couples electron transfer with translocation of ions across the membrane. Required to maintain the reduced state of SoxR. This is Ion-translocating oxidoreductase complex subunit E from Escherichia coli O1:K1 / APEC.